Here is a 477-residue protein sequence, read N- to C-terminus: ETS translocation variant 1 (477 aa).

Phosphoserine is present on S94. A disordered region spans residues 128–179 (PQVGMRPSNPPTPSSTPVSPLHHASPNSTHTPKPDRAFPAHLPPSQSIPDSS). A phosphoserine; by RPS6KA1 and RPS6KA5 mark is found at S191 and S216. K317 participates in a covalent cross-link: Glycyl lysine isopeptide (Lys-Gly) (interchain with G-Cter in SUMO2). The ETS DNA-binding region spans 335–415 (LQLWQFLVAL…AGERYVYKFV (81 aa)).

Belongs to the ETS family. Post-translationally, sumoylated. Phosphorylated at Ser-191 and Ser-216 by RPS6KA1 and RPS6KA5; phosphorylation activates transcriptional activity. As to expression, very highly expressed in brain, highly expressed in testis, lung and heart, moderately in spleen, small intestine, pancreas and colon, weakly in liver, prostate and thymus, very weakly in skeletal muscle, kidney and ovary and not in placenta and peripheral blood leukocytes.

The protein localises to the nucleus. Transcriptional activator that binds to DNA sequences containing the consensus pentanucleotide 5'-CGGA[AT]-3'. Required for olfactory dopaminergic neuron differentiation; may directly activate expression of tyrosine hydroxylase (TH). The sequence is that of ETS translocation variant 1 from Homo sapiens (Human).